The following is a 679-amino-acid chain: DNA ligase (679 aa).

NAD(+) contacts are provided by residues 41–45, 90–91, and Glu-120; these read DSVYD and SL. The active-site N6-AMP-lysine intermediate is the Lys-122. 4 residues coordinate NAD(+): Arg-143, Glu-177, Lys-293, and Lys-317. Residues Cys-411, Cys-414, Cys-429, and Cys-434 each contribute to the Zn(2+) site. In terms of domain architecture, BRCT spans 597–679; sequence DSNSWFAGKR…SETMREDAQA (83 aa).

This sequence belongs to the NAD-dependent DNA ligase family. LigA subfamily. Mg(2+) serves as cofactor. Requires Mn(2+) as cofactor.

The enzyme catalyses NAD(+) + (deoxyribonucleotide)n-3'-hydroxyl + 5'-phospho-(deoxyribonucleotide)m = (deoxyribonucleotide)n+m + AMP + beta-nicotinamide D-nucleotide.. Its function is as follows. DNA ligase that catalyzes the formation of phosphodiester linkages between 5'-phosphoryl and 3'-hydroxyl groups in double-stranded DNA using NAD as a coenzyme and as the energy source for the reaction. It is essential for DNA replication and repair of damaged DNA. The sequence is that of DNA ligase from Lactiplantibacillus plantarum (strain ATCC BAA-793 / NCIMB 8826 / WCFS1) (Lactobacillus plantarum).